The sequence spans 121 residues: Large ribosomal subunit protein bL12 (121 aa).

Belongs to the bacterial ribosomal protein bL12 family. Homodimer. Part of the ribosomal stalk of the 50S ribosomal subunit. Forms a multimeric L10(L12)X complex, where L10 forms an elongated spine to which 2 to 4 L12 dimers bind in a sequential fashion. Binds GTP-bound translation factors.

In terms of biological role, forms part of the ribosomal stalk which helps the ribosome interact with GTP-bound translation factors. Is thus essential for accurate translation. In Pseudomonas fluorescens (strain SBW25), this protein is Large ribosomal subunit protein bL12.